The chain runs to 889 residues: Translation initiation factor IF-2 (889 aa).

Positions 1–299 are disordered; the sequence is MTDNKDDKTL…EKFKRSQMQE (299 aa). Positions 61–76 are enriched in low complexity; that stretch reads ITPVAATPAARPAEQR. A compositionally biased stretch (pro residues) spans 77–93; the sequence is PMPPQPSGRPAPQPQPH. Positions 116-182 are enriched in basic and acidic residues; sequence MEARRRALAE…EAEKTEEKVE (67 aa). Residues 196–215 show a composition bias toward low complexity; it reads RPQPGRAAPAATPAAPDGAA. The segment covering 220-231 has biased composition (basic and acidic residues); sequence RGTESEEDERRR. The 168-residue stretch at 387 to 554 folds into the tr-type G domain; the sequence is SRPPIVTIMG…AILLQSEILD (168 aa). The G1 stretch occupies residues 396–403; it reads GHVDHGKT. 396–403 provides a ligand contact to GTP; that stretch reads GHVDHGKT. Residues 421–425 are G2; the sequence is GITQH. Residues 442–445 form a G3 region; it reads DTPG. GTP-binding positions include 442-446 and 496-499; these read DTPGH and NKID. A G4 region spans residues 496–499; that stretch reads NKID. The G5 stretch occupies residues 532–534; that stretch reads SAK.

This sequence belongs to the TRAFAC class translation factor GTPase superfamily. Classic translation factor GTPase family. IF-2 subfamily.

It is found in the cytoplasm. One of the essential components for the initiation of protein synthesis. Protects formylmethionyl-tRNA from spontaneous hydrolysis and promotes its binding to the 30S ribosomal subunits. Also involved in the hydrolysis of GTP during the formation of the 70S ribosomal complex. This is Translation initiation factor IF-2 from Rhizobium meliloti (strain 1021) (Ensifer meliloti).